We begin with the raw amino-acid sequence, 579 residues long: Leucine-rich repeat-containing protein 15 (579 aa).

A signal peptide spans 1–21 (MPLKHYLLLLVSCQAWAAGLA). In terms of domain architecture, LRRNT spans 22–53 (YYGCPSECTCSRASQVECTGAQIVAMPSPLPW). The Extracellular portion of the chain corresponds to 22–536 (YYGCPSECTC…TWGMTDAQSG (515 aa)). LRR repeat units lie at residues 54–75 (NAMS…KFLN), 78–99 (ALIA…AFRN), 102–123 (SLRH…LFQD), 126–147 (NLET…QFSQ), 150–171 (NLKE…VFDH), 174–195 (GLTK…VFQH), 198–219 (NLQV…TFDA), 222–243 (NLQE…LFHN), 246–267 (NLQR…IFMQ), 270–291 (HLNK…VFGP), 294–315 (NLRE…AFSH), 318–339 (QLQV…AFNG), 342–363 (NLRE…VFRS), 366–387 (NLRN…IFAN), and 390–411 (GLMT…IFDH). The N-linked (GlcNAc...) asparagine glycan is linked to Asn75. N-linked (GlcNAc...) asparagine glycosylation occurs at Asn369. Residues 423–473 (NPWRCDSNILPLHDWLILNRARLGTDTLPVCSSPASVRGQSLVIINVNFPG) form the LRRCT domain. Residues 476–509 (VQGPETPEVSSYPDTSSYPDSTSISSTTEITRST) are disordered. Over residues 485–506 (SSYPDTSSYPDSTSISSTTEIT) the composition is skewed to low complexity. The chain crosses the membrane as a helical span at residues 537 to 557 (LAIAAIVIGIIALACSLAACI). Residues 558–579 (CCCCCKKRSQAVLMQMKAPNEC) lie on the Cytoplasmic side of the membrane.

In terms of tissue distribution, expressed in chodrocytes (at protein level).

Its subcellular location is the cell membrane. The polypeptide is Leucine-rich repeat-containing protein 15 (Lrrc15) (Mus musculus (Mouse)).